A 407-amino-acid chain; its full sequence is 1-deoxy-D-xylulose 5-phosphate reductoisomerase (407 aa).

Positions 25, 26, 27, 28, 53, and 136 each coordinate NADPH. K137 provides a ligand contact to 1-deoxy-D-xylulose 5-phosphate. E138 serves as a coordination point for NADPH. Residue D162 coordinates Mn(2+). 1-deoxy-D-xylulose 5-phosphate is bound by residues S163, E164, S188, and H211. A Mn(2+)-binding site is contributed by E164. G217 serves as a coordination point for NADPH. 1-deoxy-D-xylulose 5-phosphate contacts are provided by S224, N229, K230, and E233. Mn(2+) is bound at residue E233.

Belongs to the DXR family. Mg(2+) is required as a cofactor. Requires Mn(2+) as cofactor.

It catalyses the reaction 2-C-methyl-D-erythritol 4-phosphate + NADP(+) = 1-deoxy-D-xylulose 5-phosphate + NADPH + H(+). The protein operates within isoprenoid biosynthesis; isopentenyl diphosphate biosynthesis via DXP pathway; isopentenyl diphosphate from 1-deoxy-D-xylulose 5-phosphate: step 1/6. Its function is as follows. Catalyzes the NADPH-dependent rearrangement and reduction of 1-deoxy-D-xylulose-5-phosphate (DXP) to 2-C-methyl-D-erythritol 4-phosphate (MEP). The sequence is that of 1-deoxy-D-xylulose 5-phosphate reductoisomerase from Rhodopseudomonas palustris (strain BisA53).